A 120-amino-acid chain; its full sequence is Small ribosomal subunit protein bS16 (120 aa).

Positions 84–120 are disordered; that stretch reads KRESRNNPQQGQPKKKAQERAAAAAAAAEKAASEAAA. A compositionally biased stretch (low complexity) spans 103 to 120; sequence RAAAAAAAAEKAASEAAA.

The protein belongs to the bacterial ribosomal protein bS16 family.

This Beijerinckia indica subsp. indica (strain ATCC 9039 / DSM 1715 / NCIMB 8712) protein is Small ribosomal subunit protein bS16.